A 337-amino-acid polypeptide reads, in one-letter code: DNA-directed RNA polymerase subunit alpha (337 aa).

The alpha N-terminal domain (alpha-NTD) stretch occupies residues 1–233 (MIQKNWQELI…DQLSIFVNFE (233 aa)). An alpha C-terminal domain (alpha-CTD) region spans residues 249–337 (FNPVLLKKVD…DLAKRYEDQY (89 aa)).

Belongs to the RNA polymerase alpha chain family. In terms of assembly, homodimer. The RNAP catalytic core consists of 2 alpha, 1 beta, 1 beta' and 1 omega subunit. When a sigma factor is associated with the core the holoenzyme is formed, which can initiate transcription.

The catalysed reaction is RNA(n) + a ribonucleoside 5'-triphosphate = RNA(n+1) + diphosphate. DNA-dependent RNA polymerase catalyzes the transcription of DNA into RNA using the four ribonucleoside triphosphates as substrates. In Brucella canis (strain ATCC 23365 / NCTC 10854 / RM-666), this protein is DNA-directed RNA polymerase subunit alpha.